The primary structure comprises 740 residues: MEPTLQSAMEEQLKILREISDRLAAQEARWRSRESTVTQHSRSIHDLEVAMASAPSATLRAELDAPVAVTYERLDATEAASAARVSALESTTATFDMLFDNSDIVEKFNAEVVADDWGGLFGQHAHPLDSGGARLLLPSAALPFASATDTAFSSIYGVECGTIHTYTAALTRPAALHKPLVVAHAKCSTPGHNRVCAETQRQGPRQARRQCRLRVHVRRLHFTGLQLHVRQHGRRRQHVVHVQRVLPGAELDGRGLRLPWPRVAHGDRPFRAHLQLHHIDPDGGGGGGHGITPPERWLSRAGAYNAAAPNEVDVLRWTLKGVLWPRVTYCIAGWIDLGDGVAEGADHAVRVRFRVDDGCVVEGGTVCAESGSWTEIKGVFRLKRNARVMEVYVQGAVAGIDVKVTDPQVFATNVIQNLAYVDFFTKHFDWAVFEKEFRWYHVEDAAKVFDKMLTKGEEAPSVQRGVVMTAVAHNLLVQALFMDGRASDAYVVLEEMQNNGPFPDVFTYTLKVLKNGQWAEEESTILVPGDIIGVKLGDIISADTRLLEGDPLKIDQSALTGNFCICSIVAGMLVEFIVMYPIQDMVYRPRIDKLLVLLIGGIPIAMPTVLSVTMSIGAYRLAQQGAITKRMTTIEEMAGMDVPCSDKTGTLPWTKLTVIKSLVDVFQRGADQDAVILMDARASCTKNQDAIEATIVSMLAAPKEACAGVQEIQFLPFNPNDKRTAVTYMSLIYALSPGKA.

The stretch at T469 to P503 is one PPR repeat.

In terms of biological role, bs1 is probably an active plant retrotransposon. This Zea mays (Maize) protein is Putative Pol polyprotein from transposon element Bs1.